A 313-amino-acid polypeptide reads, in one-letter code: Pantoate--beta-alanine ligase (313 aa).

36–43 provides a ligand contact to ATP; the sequence is MGYLHQGH. His43 (proton donor) is an active-site residue. Gln71 contacts (R)-pantoate. Gln71 contacts beta-alanine. Residue 178–181 coordinates ATP; sequence GKKD. Gln184 contributes to the (R)-pantoate binding site. 215–218 serves as a coordination point for ATP; the sequence is MSSR.

The protein belongs to the pantothenate synthetase family. As to quaternary structure, homodimer.

It is found in the cytoplasm. The protein localises to the cytosol. It catalyses the reaction (R)-pantoate + beta-alanine + ATP = (R)-pantothenate + AMP + diphosphate + H(+). It functions in the pathway cofactor biosynthesis; (R)-pantothenate biosynthesis; (R)-pantothenate from (R)-pantoate and beta-alanine: step 1/1. Functionally, catalyzes the condensation of pantoate with beta-alanine to form pantothenate. Essential for panthotenate biosynthesis. This chain is Pantoate--beta-alanine ligase (PANC), found in Oryza sativa subsp. japonica (Rice).